The sequence spans 304 residues: UDP-N-acetylenolpyruvoylglucosamine reductase (304 aa).

One can recognise an FAD-binding PCMH-type domain in the interval 34-198 (IGGKADFLVW…LEVVFALRPG (165 aa)). Arg177 is an active-site residue. Ser227 (proton donor) is an active-site residue. Glu297 is an active-site residue.

The protein belongs to the MurB family. The cofactor is FAD.

It localises to the cytoplasm. The catalysed reaction is UDP-N-acetyl-alpha-D-muramate + NADP(+) = UDP-N-acetyl-3-O-(1-carboxyvinyl)-alpha-D-glucosamine + NADPH + H(+). Its pathway is cell wall biogenesis; peptidoglycan biosynthesis. In terms of biological role, cell wall formation. In Geobacillus kaustophilus (strain HTA426), this protein is UDP-N-acetylenolpyruvoylglucosamine reductase.